A 165-amino-acid chain; its full sequence is Disulfide bond formation protein B (165 aa).

At 1-10 (MPAWLTNRTI) the chain is on the cytoplasmic side. Residues 11–27 (YFLCFLAIAGLMGFAFY) form a helical membrane-spanning segment. Over 28–45 (LQYVKDLEPCPLCMAQRI) the chain is Periplasmic. An intrachain disulfide couples Cys-37 to Cys-40. The helical transmembrane segment at 46-62 (AFVLAGLVFLAAALHNP) threads the bilayer. Residues 63-68 (KNTGTT) are Cytoplasmic-facing. Residues 69–86 (VYAFLGWVTTLGGAALAT) traverse the membrane as a helical segment. At 87–143 (RQLWLQSLPADQVPACGPGLEYMLEAFPFSEVLTMMLTGTGECAEVQWTFLGLSIPG) the chain is on the periplasmic side. Cys-102 and Cys-129 are oxidised to a cystine. The helical transmembrane segment at 144-162 (WTLVAFIGFTAVWAFAWVR) threads the bilayer. Residues 163 to 165 (RPR) are Cytoplasmic-facing.

Belongs to the DsbB family.

Its subcellular location is the cell inner membrane. In terms of biological role, required for disulfide bond formation in some periplasmic proteins. Acts by oxidizing the DsbA protein. This is Disulfide bond formation protein B from Hahella chejuensis (strain KCTC 2396).